Consider the following 861-residue polypeptide: DNA mismatch repair protein MutS (861 aa).

618 to 625 is a binding site for ATP; it reads GPNMGGKS.

Belongs to the DNA mismatch repair MutS family.

Functionally, this protein is involved in the repair of mismatches in DNA. It is possible that it carries out the mismatch recognition step. This protein has a weak ATPase activity. The protein is DNA mismatch repair protein MutS of Shewanella sp. (strain ANA-3).